A 153-amino-acid polypeptide reads, in one-letter code: Ribosome maturation factor RimP (153 aa).

This sequence belongs to the RimP family.

The protein localises to the cytoplasm. Its function is as follows. Required for maturation of 30S ribosomal subunits. The polypeptide is Ribosome maturation factor RimP (Clostridium botulinum (strain 657 / Type Ba4)).